The sequence spans 563 residues: Alpha-keto-acid decarboxylase (563 aa).

Residue glutamate 59 coordinates thiamine diphosphate. Residues 347-367 (SSPPVASPPAEPLPPPPPREQ) are disordered. The segment covering 351–366 (VASPPAEPLPPPPPRE) has biased composition (pro residues). A thiamine pyrophosphate binding region spans residues 394–476 (TSFYGMADHR…VVVNNDGYTV (83 aa)). Mg(2+) contacts are provided by aspartate 444, asparagine 471, and glycine 473.

It belongs to the TPP enzyme family. The cofactor is a metal cation. Thiamine diphosphate is required as a cofactor.

Functionally, decarboxylates branched-chain and aromatic alpha-keto acids to aldehydes. The sequence is that of Alpha-keto-acid decarboxylase (kdc) from Mycolicibacterium paratuberculosis (strain ATCC BAA-968 / K-10) (Mycobacterium paratuberculosis).